Consider the following 111-residue polypeptide: Photosystem II reaction center Psb28 protein (111 aa).

This sequence belongs to the Psb28 family. As to quaternary structure, part of the photosystem II complex.

It is found in the cellular thylakoid membrane. This chain is Photosystem II reaction center Psb28 protein, found in Nostoc sp. (strain PCC 7120 / SAG 25.82 / UTEX 2576).